We begin with the raw amino-acid sequence, 490 residues long: Betaine aldehyde dehydrogenase (490 aa).

NAD(+)-binding positions include K174, E177, and 227-232 (GGIETG). Catalysis depends on residues E249 and C283. E384 provides a ligand contact to NAD(+).

This sequence belongs to the aldehyde dehydrogenase family. As to quaternary structure, homodimer.

It catalyses the reaction betaine aldehyde + NAD(+) + H2O = glycine betaine + NADH + 2 H(+). Its pathway is amine and polyamine biosynthesis; betaine biosynthesis via choline pathway; betaine from betaine aldehyde: step 1/1. With respect to regulation, activity is stimulated by low concentrations of salts and by moderate concentrations of glycine betaine. Highly tolerant to high ionic conditions. In vitro, activity is highly stimulated in the presence of proline. In terms of biological role, involved in the biosynthesis of the osmoprotectant glycine betaine from choline. Catalyzes the oxidation of betaine aldehyde to betaine. Shows specificity for betaine aldehyde as substrate. Can use both NAD(+) and NADP(+), but NAD(+) is strongly preferred. The protein is Betaine aldehyde dehydrogenase of Bacillus subtilis (strain 168).